The sequence spans 138 residues: MRILWIVAVCLIGVEGNLFQFAKMINGKLGAFSVWNYISYGCYCGWGGQGTPKDATDRCCFVHDCCYGRVRGCNPKLAIYAYSFKKGNIVCGKNNGCLRDICECDRVAANCFHQNKNTYNKNYRFLSSSRCRQTSEQC.

The N-terminal stretch at 1-16 (MRILWIVAVCLIGVEG) is a signal peptide. 7 disulfides stabilise this stretch: cysteine 42/cysteine 131, cysteine 44/cysteine 60, cysteine 59/cysteine 111, cysteine 65/cysteine 138, cysteine 66/cysteine 104, cysteine 73/cysteine 97, and cysteine 91/cysteine 102. The Ca(2+) site is built by tyrosine 43, glycine 45, and glycine 47. Histidine 63 is a catalytic residue. Aspartate 64 is a binding site for Ca(2+). Aspartate 105 is a catalytic residue.

Heterodimer of an acidic and a basic chain; non-covalently linked. The toxic basic protein has phospholipase A2 activity (chain HDP-2P) and the non-toxic acidic protein functions as its inhibitor (chain HPD-1I (AC A4VBF0)). Ca(2+) is required as a cofactor. In terms of tissue distribution, expressed by the venom gland.

Its subcellular location is the secreted. The enzyme catalyses a 1,2-diacyl-sn-glycero-3-phosphocholine + H2O = a 1-acyl-sn-glycero-3-phosphocholine + a fatty acid + H(+). Enzymatic activity and neurotoxicity are inhibited by Triton X-100. Triton X-100 has been determined to be located in the center of the hydrophobic channel of the enzyme. Monomer: snake venom phospholipase A2 (PLA2) that affects neuromuscular transmission presynaptically. It has catalytic activity, anticoagulant activity and weakly inhibits ADP-induced platelet aggregation. PLA2 catalyzes the calcium-dependent hydrolysis of the 2-acyl groups in 3-sn-phosphoglycerides. Functionally, heterodimer: shows the same activities as the monomer, but with a lower potency. This Vipera nikolskii (Nikolsky's adder) protein is Basic phospholipase A2 chain HDP-2P.